The primary structure comprises 318 residues: MARLGRLLSVLGLVLCGATGLGLSAPPAPTPKKPIIGILMQKCHNKNMRALGKYYIAASYVKFLESAGARVVPVRLDLKNEEYEKLFKSINGVLFPGGSVNLMRSGYARVAKMFYNLSIKSFGEGDYFPVWGTCLGFEELIYLVSGESLLTLTDTVGIKLPLNFSRGTLQSRMFQNFPADLLLSLAVEPLTAHFHKWSLSVMNFTKNEKLKAFFSILTTNTDGNIDFISTMEGYRYPIYGVQWHPEKAPYEWGQLRGISHAPNAVKAAFYLAEFFVAEARKSNHHFESDVEETKALIYQYRPTYTGNVSSFQQSYIFD.

An N-terminal signal peptide occupies residues 1 to 24; the sequence is MARLGRLLSVLGLVLCGATGLGLS. One can recognise a Gamma-glutamyl hydrolase domain in the interval 25-318; it reads APPAPTPKKP…SSFQQSYIFD (294 aa). Asparagine 116 carries an N-linked (GlcNAc...) asparagine glycan. The active-site Nucleophile is cysteine 134. 2 N-linked (GlcNAc...) asparagine glycosylation sites follow: asparagine 163 and asparagine 203. Catalysis depends on histidine 244, which acts as the Proton donor. Residue asparagine 307 is glycosylated (N-linked (GlcNAc...) asparagine).

It belongs to the peptidase C26 family. As to quaternary structure, homodimer.

It localises to the secreted. The protein localises to the extracellular space. The protein resides in the lysosome. It is found in the melanosome. The catalysed reaction is (6S)-5,6,7,8-tetrahydrofolyl-(gamma-L-Glu)(n) + (n-1) H2O = (6S)-5,6,7,8-tetrahydrofolate + (n-1) L-glutamate. In terms of biological role, hydrolyzes the polyglutamate sidechains of pteroylpolyglutamates. Progressively removes gamma-glutamyl residues from pteroylpoly-gamma-glutamate to yield pteroyl-alpha-glutamate (folic acid) and free glutamate. May play an important role in the bioavailability of dietary pteroylpolyglutamates and in the metabolism of pteroylpolyglutamates and antifolates. Exhibits either endo- or exopeptidase activity depending upon the tissue of origin. When secreted, it acts primarily as an endopeptidase. This chain is Gamma-glutamyl hydrolase (GGH), found in Bos taurus (Bovine).